Reading from the N-terminus, the 151-residue chain is UPF0098 protein MTH_273 (151 aa).

It belongs to the UPF0098 family.

This is UPF0098 protein MTH_273 from Methanothermobacter thermautotrophicus (strain ATCC 29096 / DSM 1053 / JCM 10044 / NBRC 100330 / Delta H) (Methanobacterium thermoautotrophicum).